The following is a 207-amino-acid chain: Claudin-11 (207 aa).

Position 1 (Met-1) is a topological domain, cytoplasmic. A helical membrane pass occupies residues 2–22 (VATCLQVVGFVTSFVGWIGVI). Topologically, residues 23–82 (VTTSTNDWVVTCGYTIPTCRKLDELGSKGLWADCVMATGLYHCKPLVDILILPGYVQACR) are extracellular. Residues 83–103 (ALMIAASVLGLPAILLLLTVL) form a helical membrane-spanning segment. Residues 104 to 122 (PCIRMGHEPGVAKYRRAQL) are Cytoplasmic-facing. The helical transmembrane segment at 123–143 (AGVLLILLALCAIVATIWFPV) threads the bilayer. Over 144–157 (CAHRETTIVSFGYS) the chain is Extracellular. The chain crosses the membrane as a helical span at residues 158-178 (LYAGWIGAVLCLVGGCVILCC). Residues 179–207 (AGDAQAFGENRFYYSSGSSSPTHAKSAHV) lie on the Cytoplasmic side of the membrane. Phosphoserine occurs at positions 193, 194, 197, and 198.

The protein belongs to the claudin family. In terms of assembly, interacts with tetraspanin-3/TSPAN3. Interacts with OCLN.

The protein localises to the cell junction. It is found in the tight junction. It localises to the cell membrane. In terms of biological role, plays a major role in tight junction-specific obliteration of the intercellular space, through calcium-independent cell-adhesion activity. This chain is Claudin-11 (CLDN11), found in Macaca fascicularis (Crab-eating macaque).